We begin with the raw amino-acid sequence, 96 residues long: Probable quinol oxidase subunit 4 (96 aa).

3 helical membrane passes run 8–28, 37–57, and 68–88; these read TVGF…TLYT, TIIF…FMHL, and FKVI…YWVM.

The protein belongs to the cytochrome c oxidase bacterial subunit 4 family.

It localises to the cell membrane. The catalysed reaction is 2 a quinol + O2 = 2 a quinone + 2 H2O. Its function is as follows. Catalyzes quinol oxidation with the concomitant reduction of oxygen to water. The chain is Probable quinol oxidase subunit 4 (qoxD) from Staphylococcus haemolyticus (strain JCSC1435).